Here is a 155-residue protein sequence, read N- to C-terminus: E3 ubiquitin-protein ligase LAP (155 aa).

Residues 1–55 form an RING-CH-type zinc finger; it reads MDPVCWICKDDYSIEKNYCNCKNEYKVVHDECMKKWIQYSRERSCKLCNKEYNII. The Cytoplasmic portion of the chain corresponds to 1-74; it reads MDPVCWICKD…VFSIKDCKKS (74 aa). Positions 5, 8, 19, 21, 29, 32, 45, and 48 each coordinate Zn(2+). Residues 75–95 form a helical membrane-spanning segment; the sequence is AILYATLFLCTFIISLVLTRI. Over 96-115 the chain is Lumenal; sequence NITKIIDTSKNDVSFKLVTM. The chain crosses the membrane as a helical span at residues 116-136; the sequence is IFYLLPFVITCISFITLIVYL. Topologically, residues 137–155 are cytoplasmic; that stretch reads YKYCKISAKNNTYDTIYEL.

Belongs to the poxviridae LAP protein family.

It is found in the host membrane. It localises to the host Golgi apparatus. Its subcellular location is the host trans-Golgi network membrane. The protein localises to the host early endosome membrane. It carries out the reaction S-ubiquitinyl-[E2 ubiquitin-conjugating enzyme]-L-cysteine + [acceptor protein]-L-lysine = [E2 ubiquitin-conjugating enzyme]-L-cysteine + N(6)-ubiquitinyl-[acceptor protein]-L-lysine.. Its function is as follows. E3 ubiquitin-protein ligase which promotes ubiquitination and subsequent degradation of host MHC-I and CD4 molecules, presumably to prevent lysis of infected cells by cytotoxic T-lymphocytes and NK cell. Binds target molecules through transmembrane interaction. The result of this ubiquitination is the enhancement of the endocytosis of the target chain and the delivery to the lysosome, where it is proteolytically destroyed. The polypeptide is E3 ubiquitin-protein ligase LAP (LAP) (Swinepox virus (strain Kasza) (SWPV)).